The primary structure comprises 527 residues: Amine oxidase [flavin-containing] A (527 aa).

Residue M1 is modified to N-acetylmethionine. Over 1 to 497 (MENQEKASIA…HTFWERNLPS (497 aa)) the chain is Cytoplasmic. Phosphoserine is present on S383. An S-8alpha-FAD cysteine modification is found at C406. A helical; Anchor for type IV membrane protein transmembrane segment spans residues 498–518 (VSGLLKIIGFSTSVTALGFVL). Residues 519-527 (YKYKLLPRS) lie on the Mitochondrial intermembrane side of the membrane. The segment at 520–522 (KYK) is interaction with membrane phospholipid headgroups.

Belongs to the flavin monoamine oxidase family. As to quaternary structure, monomer, homo- or heterodimer (containing two subunits of similar size). Each subunit contains a covalently bound flavin. Enzymatically active as monomer. The cofactor is FAD.

The protein resides in the mitochondrion outer membrane. It catalyses the reaction a secondary aliphatic amine + O2 + H2O = a primary amine + an aldehyde + H2O2. The enzyme catalyses a primary methyl amine + O2 + H2O = an aldehyde + H2O2 + NH4(+). It carries out the reaction (R)-adrenaline + O2 + H2O = (R)-3,4-dihydroxymandelaldehyde + methylamine + H2O2. The catalysed reaction is dopamine + O2 + H2O = 3,4-dihydroxyphenylacetaldehyde + H2O2 + NH4(+). It catalyses the reaction tyramine + O2 + H2O = (4-hydroxyphenyl)acetaldehyde + H2O2 + NH4(+). The enzyme catalyses (R)-noradrenaline + O2 + H2O = (R)-3,4-dihydroxymandelaldehyde + H2O2 + NH4(+). It carries out the reaction serotonin + O2 + H2O = (5-hydroxyindol-3-yl)acetaldehyde + H2O2 + NH4(+). The catalysed reaction is kynuramine + O2 + H2O = 3-(2-aminophenyl)-3-oxopropanal + H2O2 + NH4(+). It catalyses the reaction tryptamine + O2 + H2O = indole-3-acetaldehyde + H2O2 + NH4(+). The enzyme catalyses 2-phenylethylamine + O2 + H2O = 2-phenylacetaldehyde + H2O2 + NH4(+). Its function is as follows. Catalyzes the oxidative deamination of primary and some secondary amine such as neurotransmitters, with concomitant reduction of oxygen to hydrogen peroxide and has important functions in the metabolism of neuroactive and vasoactive amines in the central nervous system and peripheral tissues. Preferentially oxidizes serotonin. Also catalyzes the oxidative deamination of kynuramine to 3-(2-aminophenyl)-3-oxopropanal that can spontaneously condense to 4-hydroxyquinoline. This is Amine oxidase [flavin-containing] A from Pongo abelii (Sumatran orangutan).